A 463-amino-acid chain; its full sequence is ATP-dependent protease ATPase subunit HslU (463 aa).

ATP is bound by residues isoleucine 19, 61–66 (GVGKTE), aspartate 277, glutamate 341, and arginine 413.

This sequence belongs to the ClpX chaperone family. HslU subfamily. As to quaternary structure, a double ring-shaped homohexamer of HslV is capped on each side by a ring-shaped HslU homohexamer. The assembly of the HslU/HslV complex is dependent on binding of ATP.

It is found in the cytoplasm. ATPase subunit of a proteasome-like degradation complex; this subunit has chaperone activity. The binding of ATP and its subsequent hydrolysis by HslU are essential for unfolding of protein substrates subsequently hydrolyzed by HslV. HslU recognizes the N-terminal part of its protein substrates and unfolds these before they are guided to HslV for hydrolysis. The chain is ATP-dependent protease ATPase subunit HslU from Bacillus cereus (strain AH187).